Consider the following 354-residue polypeptide: Isocitrate dehydrogenase [NAD] regulatory subunit A, mitochondrial (354 aa).

Residues serine 95, asparagine 97, arginine 101, arginine 111, and arginine 132 each contribute to the substrate site. The Mg(2+) site is built by aspartate 219, aspartate 243, and aspartate 247. NADP(+)-binding positions include 276-282 (HGTAPDI) and asparagine 289.

It belongs to the isocitrate and isopropylmalate dehydrogenases family. In terms of assembly, heterooligomer of catalytic and regulatory subunits. It depends on Mg(2+) as a cofactor. Requires Mn(2+) as cofactor.

The protein localises to the mitochondrion. The enzyme catalyses D-threo-isocitrate + NAD(+) = 2-oxoglutarate + CO2 + NADH. Functionally, performs an essential role in the oxidative function of the citric acid cycle. The polypeptide is Isocitrate dehydrogenase [NAD] regulatory subunit A, mitochondrial (idhA) (Dictyostelium discoideum (Social amoeba)).